We begin with the raw amino-acid sequence, 358 residues long: ATPase ASNA1 homolog (358 aa).

Residue 35–42 coordinates ATP; sequence KGGVGKTT. Residue aspartate 64 is part of the active site. Residues glutamate 235 and asparagine 262 each contribute to the ATP site.

This sequence belongs to the arsA ATPase family. As to quaternary structure, homodimer.

It is found in the cytoplasm. The protein localises to the endoplasmic reticulum. ATPase required for the post-translational delivery of tail-anchored (TA) proteins to the endoplasmic reticulum. Recognizes and selectively binds the transmembrane domain of TA proteins in the cytosol. This complex then targets to the endoplasmic reticulum by membrane-bound receptors, where the tail-anchored protein is released for insertion. This process is regulated by ATP binding and hydrolysis. ATP binding drives the homodimer towards the closed dimer state, facilitating recognition of newly synthesized TA membrane proteins. ATP hydrolysis is required for insertion. Subsequently, the homodimer reverts towards the open dimer state, lowering its affinity for the membrane-bound receptor, and returning it to the cytosol to initiate a new round of targeting. The sequence is that of ATPase ASNA1 homolog from Babesia bovis.